The chain runs to 291 residues: MRSSLVLFFVSAWTALASPIRREVSQDLFNQFNLFAQYSAAAYCGKNNDAPAGTNITCTGNACPEVEKADATFLYSFEDSGVGDVTGFLALDNTNKLIVLSFRGSRSIENWIGNLNFDLKEINDICSGCRGHDGFTSSWRSVADTLRQKVEDAVREHPDYRVVFTGHSLGGALATVAGADLRGNGYDIDVFSYGAPRVGNRAFAEFLTVQTGGTLYRITHTNDIVPRLPPREFGYSHSSPEYWIKSGTLVPVTRNDIVKIEGIDATGGNNQPNIPDIPAHLWYFGLIGTCL.

An N-terminal signal peptide occupies residues 1–17 (MRSSLVLFFVSAWTALA). A propeptide spanning residues 18–22 (SPIRR) is cleaved from the precursor. 3 cysteine pairs are disulfide-bonded: cysteine 44–cysteine 290, cysteine 58–cysteine 63, and cysteine 126–cysteine 129. The Nucleophile role is filled by serine 168. Catalysis depends on charge relay system residues aspartate 223 and histidine 280.

The protein belongs to the AB hydrolase superfamily. Lipase family.

It carries out the reaction a triacylglycerol + H2O = a diacylglycerol + a fatty acid + H(+). The polypeptide is Lipase (LIP) (Thermomyces lanuginosus (Humicola lanuginosa)).